The chain runs to 85 residues: Toxin Cll6 (85 aa).

The signal sequence occupies residues Met-1 to Thr-19. The 64-residue stretch at Lys-20–Ser-83 folds into the LCN-type CS-alpha/beta domain. 4 cysteine pairs are disulfide-bonded: Cys-31–Cys-82, Cys-35–Cys-58, Cys-44–Cys-63, and Cys-48–Cys-65. Residue Ser-83 is modified to Serine amide.

Belongs to the long (4 C-C) scorpion toxin superfamily. Sodium channel inhibitor family. Beta subfamily. In terms of tissue distribution, expressed by the venom gland.

It localises to the secreted. In terms of biological role, beta toxins bind voltage-independently at site-4 of sodium channels (Nav) and shift the voltage of activation toward more negative potentials thereby affecting sodium channel activation and promoting spontaneous and repetitive firing. In Centruroides limpidus (Mexican scorpion), this protein is Toxin Cll6.